The sequence spans 464 residues: Growth hormone-releasing hormone receptor (464 aa).

Positions 1-22 (MDSLLWATWVLCLLNLWGVALG) are cleaved as a signal peptide. At 23–130 (HLHLECDFIT…EEKSYFSTVK (108 aa)) the chain is on the extracellular side. 3 disulfide bridges follow: Cys-41–Cys-64, Cys-55–Cys-96, and Cys-78–Cys-112. Asn-50 carries an N-linked (GlcNAc...) asparagine glycan. Residues 131–151 (IIYTTGHSISIVALCVAIAIL) traverse the membrane as a helical segment. Over 152–167 (VALRRLHCPRNYIHTQ) the chain is Cytoplasmic. A helical membrane pass occupies residues 168 to 188 (LFATFILKASAVFLKDAAVFQ). Over 189–210 (GDSTDHCSMSTILCKVSVAVSH) the chain is Extracellular. Residues 211–231 (FATMTNFSWLLAEAVYLSCLL) form a helical membrane-spanning segment. The Cytoplasmic segment spans residues 232-240 (ASTSPRSKP). Residues 241–261 (AFWWLVLAGWGLPVLCTGTWV) traverse the membrane as a helical segment. At 262 to 283 (GCKLAFEDTACWDLDDSSPYWW) the chain is on the extracellular side. Residues 284-304 (IIKGPIVLSVGVNFGLFLNII) traverse the membrane as a helical segment. The Cytoplasmic portion of the chain corresponds to 305 to 372 (CILLRKLGPA…QLPWRLSKST (68 aa)). The chain crosses the membrane as a helical span at residues 373-393 (LLLIPLFGIHYIIFNFLPDSA). The Extracellular portion of the chain corresponds to 394 to 398 (GLGIR). A helical transmembrane segment spans residues 399–419 (LPLELGLGSFQGFVVAVLYCF). The Cytoplasmic segment spans residues 420-464 (LNQEVRTEISRKWYGHDPELLPARRTCTEWTTPPRSRVKVLTSEC).

Belongs to the G-protein coupled receptor 2 family. Pituitary gland.

It is found in the cell membrane. Its function is as follows. Receptor for GRF, coupled to G proteins which activate adenylyl cyclase. Stimulates somatotroph cell growth, growth hormone gene transcription and growth hormone secretion. The protein is Growth hormone-releasing hormone receptor (Ghrhr) of Rattus norvegicus (Rat).